A 108-amino-acid polypeptide reads, in one-letter code: Large ribosomal subunit protein P2A (108 aa).

The disordered stretch occupies residues 62 to 108 (LSSVPSGAPAAAAGGASAAAGGEATEEAAEEEAAEESDDDMSFGLFD). Low complexity predominate over residues 68–84 (GAPAAAAGGASAAAGGE). Acidic residues predominate over residues 85 to 102 (ATEEAAEEEAAEESDDDM). Ser-98 bears the Phosphoserine mark.

It belongs to the eukaryotic ribosomal protein P1/P2 family.

Plays an important role in the elongation step of protein synthesis. In Candida albicans (Yeast), this protein is Large ribosomal subunit protein P2A (RPP2A).